The sequence spans 554 residues: MTPLIFVTGGVVSSLGKGIAAASLASILEARGLKVTMMKLDPYINVDPGTMSPFQHGEVYVTDDGAETDLDLGHYERYVRTRLSRKNSVTTGRIYENVIRKERRGDYLGATVQVIPHITDEIRRCIDEATAGFDVALIEIGGTVGDIESLPFLEAIRQVRTERGAEKAMFMHLTLVPYIAAAGELKTKPTQHSVKELRSIGIQPDVLLCRSEQAVPDSERRKIALFTNVSERAVISCPDIDVLYGMPLELRRQGLDELVIDQFKLRDKVAAADLSEWEAVVDAVKHPLDEVTIAVVGKYVDHQDAYKSVAEALKHGGLRQRTKVNLTWLEAQDLEGSDMAALQGIDGILVPGGFGDRGFEGKVQTSKYAREHKVPYFGICYGMQAAVVDYARHVADLDAANSTENDRQSPHPVIGLITEWRTATGEVEKRDEKSDLGGTMRLGLQEQRLKPGTLAREVYGKDVVAERHRHRYEFNNRYRTQLEDAGLVICGKSMDDTLVEMVELPRDTHPWFLACQAHPEFLSTPRDGHPLFIGFVRAAREKKAGGKLLKEARA.

The segment at methionine 1–leucine 265 is amidoligase domain. Serine 13 lines the CTP pocket. Serine 13 lines the UTP pocket. ATP contacts are provided by residues serine 14–isoleucine 19 and aspartate 71. The Mg(2+) site is built by aspartate 71 and glutamate 139. CTP-binding positions include aspartate 146 to glutamate 148, lysine 186 to glutamine 191, and lysine 222. Residues lysine 186–glutamine 191 and lysine 222 each bind UTP. The Glutamine amidotransferase type-1 domain occupies threonine 292–glycine 545. Glycine 353 is an L-glutamine binding site. Residue cysteine 380 is the Nucleophile; for glutamine hydrolysis of the active site. L-glutamine contacts are provided by residues tyrosine 381–glutamine 384, glutamate 404, and arginine 471. Residues histidine 518 and glutamate 520 contribute to the active site.

It belongs to the CTP synthase family. Homotetramer.

The enzyme catalyses UTP + L-glutamine + ATP + H2O = CTP + L-glutamate + ADP + phosphate + 2 H(+). It carries out the reaction L-glutamine + H2O = L-glutamate + NH4(+). The catalysed reaction is UTP + NH4(+) + ATP = CTP + ADP + phosphate + 2 H(+). It functions in the pathway pyrimidine metabolism; CTP biosynthesis via de novo pathway; CTP from UDP: step 2/2. Allosterically activated by GTP, when glutamine is the substrate; GTP has no effect on the reaction when ammonia is the substrate. The allosteric effector GTP functions by stabilizing the protein conformation that binds the tetrahedral intermediate(s) formed during glutamine hydrolysis. Inhibited by the product CTP, via allosteric rather than competitive inhibition. Its function is as follows. Catalyzes the ATP-dependent amination of UTP to CTP with either L-glutamine or ammonia as the source of nitrogen. Regulates intracellular CTP levels through interactions with the four ribonucleotide triphosphates. The sequence is that of CTP synthase from Xanthomonas campestris pv. campestris (strain 8004).